Here is a 536-residue protein sequence, read N- to C-terminus: Cytochrome P450 monooxygenase fscF (536 aa).

A helical membrane pass occupies residues Val9–Tyr29. Residue Cys464 participates in heme binding.

The protein belongs to the cytochrome P450 family. Heme serves as cofactor.

It localises to the membrane. It participates in secondary metabolite biosynthesis. Cytochrome P450 monooxygenase; part of the fragmented gene cluster that mediates the biosynthesis of fusarochromene, a tryptophan-derived metabolite closely related to a group of mycotoxins including fusarochromanone. Within the pathway, fscF catalyzes the epoxidation of desacetylfusarochromene which opens the way to the production of fusarochromanones. The first step of the pathway is the epimerization of L-tryptophan to D-tryptophan in the presence of the NRPS-like tryptophan epimerase fscC. D-tryptophan is subsequently hydroxylated by the tryptophan 6-hydroxylase fscE to yield 6-hydroxytryptophan. The pyrrole ring undergoes cleavaged by the tryptophan 2,3-dioxygenase fscD and is finally converted to 4-hydroxykyrunenine by the hydrolase fscH. The NRPS-like oxidoreductase fscA reduces the carboxyl group to primary alcohol and the DMATS-type prenyltransferase fscG performs prenylation, followed by the formation of a chromene ring catalyzed by the oxidoreductase fscI, which leads to desacetylfusarochromene. Epoxidation by fscF and rearrangement reactions of chromene double bonds convert compound desacetylfusarochromene to fusarochromanones. Although specific acetyltransferases were not found near the fsc gene cluster, several predicted enzymes containing the N-acetyltransferase superfamily domain are present in the genome of F.equiseti. These predicted enzymes may have the potential to convert desacetylfusarochromene to fusarochromene. The chain is Cytochrome P450 monooxygenase fscF from Fusarium equiseti (Fusarium scirpi).